We begin with the raw amino-acid sequence, 100 residues long: Large ribosomal subunit protein bL21 (100 aa).

This sequence belongs to the bacterial ribosomal protein bL21 family. Part of the 50S ribosomal subunit. Contacts protein L20.

Its function is as follows. This protein binds to 23S rRNA in the presence of protein L20. The chain is Large ribosomal subunit protein bL21 from Wolbachia pipientis wMel.